A 94-amino-acid polypeptide reads, in one-letter code: Large ribosomal subunit protein eL33 (94 aa).

Belongs to the eukaryotic ribosomal protein eL33 family.

The sequence is that of Large ribosomal subunit protein eL33 from Aeropyrum pernix (strain ATCC 700893 / DSM 11879 / JCM 9820 / NBRC 100138 / K1).